The chain runs to 104 residues: MGGYKGIKADGGKVNQAKQLAAKIAKDIEACQKQTQQLAEYIEGSDWEGQFANKVKDVLLIMAKFQEELVQPMADHQKAIDNLSQNLAKYDTLSIKQGLDRVNP.

The protein belongs to the WXG100 family. In terms of assembly, homodimer. When mixed with EsxA does not form heterodimers.

It localises to the secreted. Its function is as follows. Virulence factor that is important for the establishment of infection in the host. EsxB is required for EsxA synthesis as well as secretion. Mediates together with EsxA the release of S.aureus from the host cell. Also inhibits host cytokine production and thus modulates dendritic cell-mediated immunity. The polypeptide is Type VII secretion system extracellular protein B (Staphylococcus aureus (strain Mu50 / ATCC 700699)).